The primary structure comprises 455 residues: GTPase Der (455 aa).

EngA-type G domains are found at residues 4–169 (PVVA…PPKD) and 178–353 (IQMA…EQHR). GTP is bound by residues 10-17 (GRPNVGKS), 57-61 (DTGGL), 120-123 (NKCE), 184-191 (GRPNVGKS), 231-235 (DTAGI), and 296-299 (NKWD). The KH-like domain maps to 354 to 439 (RRVSTSVVNE…PVKLYWRGKQ (86 aa)).

The protein belongs to the TRAFAC class TrmE-Era-EngA-EngB-Septin-like GTPase superfamily. EngA (Der) GTPase family. As to quaternary structure, associates with the 50S ribosomal subunit.

Its function is as follows. GTPase that plays an essential role in the late steps of ribosome biogenesis. This is GTPase Der from Parasynechococcus marenigrum (strain WH8102).